The chain runs to 369 residues: UDP-N-acetylglucosamine--N-acetylmuramyl-(pentapeptide) pyrophosphoryl-undecaprenol N-acetylglucosamine transferase (369 aa).

UDP-N-acetyl-alpha-D-glucosamine-binding positions include 10–12, N124, R161, S195, and Q295; that span reads TAG.

It belongs to the glycosyltransferase 28 family. MurG subfamily.

The protein resides in the cell membrane. It carries out the reaction di-trans,octa-cis-undecaprenyl diphospho-N-acetyl-alpha-D-muramoyl-L-alanyl-D-glutamyl-meso-2,6-diaminopimeloyl-D-alanyl-D-alanine + UDP-N-acetyl-alpha-D-glucosamine = di-trans,octa-cis-undecaprenyl diphospho-[N-acetyl-alpha-D-glucosaminyl-(1-&gt;4)]-N-acetyl-alpha-D-muramoyl-L-alanyl-D-glutamyl-meso-2,6-diaminopimeloyl-D-alanyl-D-alanine + UDP + H(+). Its pathway is cell wall biogenesis; peptidoglycan biosynthesis. Functionally, cell wall formation. Catalyzes the transfer of a GlcNAc subunit on undecaprenyl-pyrophosphoryl-MurNAc-pentapeptide (lipid intermediate I) to form undecaprenyl-pyrophosphoryl-MurNAc-(pentapeptide)GlcNAc (lipid intermediate II). The polypeptide is UDP-N-acetylglucosamine--N-acetylmuramyl-(pentapeptide) pyrophosphoryl-undecaprenol N-acetylglucosamine transferase (Acidothermus cellulolyticus (strain ATCC 43068 / DSM 8971 / 11B)).